The chain runs to 152 residues: Arginine repressor (152 aa).

This sequence belongs to the ArgR family.

It localises to the cytoplasm. The protein operates within amino-acid biosynthesis; L-arginine biosynthesis [regulation]. In terms of biological role, regulates arginine biosynthesis genes. The sequence is that of Arginine repressor from Lactococcus lactis subsp. lactis (strain IL1403) (Streptococcus lactis).